The following is a 772-amino-acid chain: Angiomotin-like protein 2 (772 aa).

Disordered regions lie at residues Gly-41 to Ser-158, Arg-170 to Phe-239, and Gln-260 to Gln-299. Composition is skewed to basic and acidic residues over residues Gln-80–Leu-91, Lys-100–Ala-112, and Arg-142–His-153. The required for interaction with CDH5 stretch occupies residues Gly-101–Gly-303. Position 107 is a phosphotyrosine; by FGFR1 (Tyr-107). Positions His-178–Ser-191 are enriched in polar residues. Positions Pro-197–Tyr-214 are enriched in pro residues. Residues Gln-221–Gly-303 are required for interaction with CDH1. Residues Ala-305 to Gln-578 adopt a coiled-coil conformation. Glycyl lysine isopeptide (Lys-Gly) (interchain with G-Cter in ubiquitin) cross-links involve residues Lys-343 and Lys-404. 2 disordered regions span residues Ile-596–Gly-615 and Gly-680–Ser-752. A compositionally biased stretch (basic and acidic residues) spans Arg-686–Ala-699. A compositionally biased stretch (polar residues) spans Asp-718–Cys-733. 2 positions are modified to phosphoserine: Ser-752 and Ser-755. The short motif at Glu-769–Ile-772 is the PDZ-binding element.

It belongs to the angiomotin family. Part of a complex composed of AMOTL2, MAGI1 and CDH5, within the complex AMOTL2 acts as a scaffold protein for the interaction of MAGI1 with CDH5. The complex is required for coupling actin fibers to cell junctions in endothelial cells. Within the complex AMOTL2 (via its N-terminus) interacts with CDH5. Interacts (via N-terminus) with MAGI1. Interacts (via N-terminus) with ACTB; the interaction facilitates binding of cell junction complexes to actin fibers in endothelial cells. Interacts with CDH1; the interaction may facilitate binding of radial actin fibers to cell junction complexes. Interacts with SRC. Interacts with YAP1; the interaction is required for ubiquitination of AMOTL2 and localization of YAP1 to tight junctions. Interacts with WWP1; the interaction facilitates WWP1 interaction with the Crumbs complex and subsequent WWP1 translocation to the plasma membrane. WWP1 interaction with the Crumbs complex promotes WWP1 monoubiquitination of AMOTL2 which subsequently activates the Hippo signaling pathway. When ubiquitinated interacts with LATS2 (via UBA domain); the interaction promotes LATS2 phosphorylation of YAP1. Interacts (via PPXY motif) with WWTR1/TAZ (via WW domain); the interaction promotes WWTR1/TAZ localization to the cytoplasm and thereby inhibition of its transcriptional properties. Interacts with PHLDB2; interaction may facilitate PHLDB2 localization to the myotube podosome cortex that surrounds the core. In terms of processing, phosphorylation at Tyr-107 is necessary for efficient binding to SRC and synergistically functioning with SRC to activate the downstream MAPK pathway. Post-translationally, monoubiquitinated at Lys-343 and Lys-404 by Crumbs complex-bound WWP1. De-ubiquitinated at Lys-343 and Lys-404 by USP9X; the interaction may be promoted by cell contact inhibition. Deubiquitination of AMOTL2 negatively regulates Hippo signaling activation. In terms of tissue distribution, expressed in skeletal muscle at neuromuscular junctions (at protein level).

The protein localises to the recycling endosome. It is found in the cytoplasm. It localises to the cell projection. The protein resides in the podosome. Its subcellular location is the cell junction. Regulates the translocation of phosphorylated SRC to peripheral cell-matrix adhesion sites. Required for proper architecture of actin filaments. Plays a role in coupling actin fibers to cell junctions in endothelial cells and is therefore required for correct endothelial cell morphology via facilitating transcellular transmission of mechanical force resulting in endothelial cell elongation. Required for the anchoring of radial actin fibers to CDH1 junction complexes at the cell membrane which facilitates organization of radial actin fiber structure and cellular response to contractile forces. This contributes to maintenance of cell area, size, shape, epithelial sheet organization and trophectoderm cell properties that facilitate blastocyst zona hatching. Inhibits the Wnt/beta-catenin signaling pathway, probably by recruiting CTNNB1 to recycling endosomes and hence preventing its translocation to the nucleus. Participates in angiogenesis. Activates the Hippo signaling pathway in response to cell contact inhibition via interaction with and ubiquitination by Crumbs complex-bound WWP1. Ubiquitinated AMOTL2 then interacts with LATS2 which in turn phosphorylates YAP1, excluding it from the nucleus and localizing it to the cytoplasm and tight junctions, therefore ultimately repressing YAP1-driven transcription of target genes. Acts to inhibit WWTR1/TAZ transcriptional coactivator activity via sequestering WWTR1/TAZ in the cytoplasm and at tight junctions. Regulates the size and protein composition of the podosome cortex and core at myofibril neuromuscular junctions. Selectively promotes FGF-induced MAPK activation through SRC. May play a role in the polarity, proliferation and migration of endothelial cells. In Mus musculus (Mouse), this protein is Angiomotin-like protein 2.